We begin with the raw amino-acid sequence, 1049 residues long: Dyslexia-associated protein KIAA0319-like protein (1049 aa).

The Cytoplasmic portion of the chain corresponds to 1–29 (MEKRLGVKPNPASWILSGYYWQTSAKWLR). Residues 30 to 50 (TLYLFYTCFCFSVLWLSTDAS) form a helical membrane-spanning segment. In terms of domain architecture, MANSC spans 49–127 (ASESRCQQGK…AFRTHSSNSM (79 aa)). The Extracellular segment spans residues 51 to 932 (ESRCQQGKTQ…ESNCEWSVLY (882 aa)). The disordered stretch occupies residues 234-277 (TTDLTAELPGGPKNVSAQPEIPEGLATTPSTQQVKSSEKTQIAV). Asn247, Asn395, and Asn487 each carry an N-linked (GlcNAc...) asparagine glycan. PKD domains follow at residues 310 to 401 (VVSA…VKPE), 409 to 498 (IAIV…VNKA), 504 to 594 (VANA…VQPE), 600 to 688 (QADA…VKEE), and 694 to 785 (IAKI…VKPD). Residues 933–953 (VIIATFVIVVALGILSWTVIC) form a helical membrane-spanning segment. At 954 to 1049 (CCKRQKGKPK…KARSPREEIL (96 aa)) the chain is on the cytoplasmic side. Thr974 is modified (phosphothreonine). 3 positions are modified to phosphoserine: Ser978, Ser1009, and Ser1031. The interval 1022 to 1049 (GKLLHGQNGSVPNGQTPLKARSPREEIL) is disordered. Over residues 1028-1037 (QNGSVPNGQT) the composition is skewed to polar residues. Residue Thr1037 is modified to Phosphothreonine.

Interacts with RTN4R. N-glycosylated.

The protein resides in the cytoplasmic granule membrane. The protein localises to the golgi apparatus membrane. Its subcellular location is the golgi apparatus. It is found in the trans-Golgi network membrane. It localises to the cell membrane. Its function is as follows. Possible role in axon guidance through interaction with RTN4R. In Pongo abelii (Sumatran orangutan), this protein is Dyslexia-associated protein KIAA0319-like protein.